A 360-amino-acid chain; its full sequence is Protein-glutamate methylesterase/protein-glutamine glutaminase 3 (360 aa).

Positions 14–131 (RVLVIDDSAT…AEGVQAYAEE (118 aa)) constitute a Response regulatory domain. At aspartate 65 the chain carries 4-aspartylphosphate. A CheB-type methylesterase domain is found at 169-360 (AGKDGRVVAV…AGKLMELDGA (192 aa)). Catalysis depends on residues serine 181, histidine 207, and aspartate 303.

This sequence belongs to the CheB family. Post-translationally, phosphorylated by CheA. Phosphorylation of the N-terminal regulatory domain activates the methylesterase activity.

Its subcellular location is the cytoplasm. It catalyses the reaction [protein]-L-glutamate 5-O-methyl ester + H2O = L-glutamyl-[protein] + methanol + H(+). The catalysed reaction is L-glutaminyl-[protein] + H2O = L-glutamyl-[protein] + NH4(+). In terms of biological role, involved in chemotaxis. Part of a chemotaxis signal transduction system that modulates chemotaxis in response to various stimuli. Catalyzes the demethylation of specific methylglutamate residues introduced into the chemoreceptors (methyl-accepting chemotaxis proteins or MCP) by CheR. Also mediates the irreversible deamidation of specific glutamine residues to glutamic acid. This chain is Protein-glutamate methylesterase/protein-glutamine glutaminase 3, found in Burkholderia thailandensis (strain ATCC 700388 / DSM 13276 / CCUG 48851 / CIP 106301 / E264).